Consider the following 51-residue polypeptide: ATP synthase F(1) complex subunit epsilon, mitochondrial (51 aa).

Lys21, Lys32, and Lys37 each carry N6-acetyllysine; alternate. An N6-succinyllysine; alternate mark is found at Lys21, Lys32, and Lys37. Residue Lys44 is modified to N6-acetyllysine.

The protein belongs to the eukaryotic ATPase epsilon family. As to quaternary structure, component of the ATP synthase complex composed at least of ATP5F1A/subunit alpha, ATP5F1B/subunit beta, ATP5MC1/subunit c (homooctomer), MT-ATP6/subunit a, MT-ATP8/subunit 8, ATP5ME/subunit e, ATP5MF/subunit f, ATP5MG/subunit g, ATP5MK/subunit k, ATP5MJ/subunit j, ATP5F1C/subunit gamma, ATP5F1D/subunit delta, ATP5F1E/subunit epsilon, ATP5PF/subunit F6, ATP5PB/subunit b, ATP5PD/subunit d, ATP5PO/subunit OSCP. ATP synthase complex consists of a soluble F(1) head domain (subunits alpha(3) and beta(3)) - the catalytic core - and a membrane F(0) domain - the membrane proton channel (subunits c, a, 8, e, f, g, k and j). These two domains are linked by a central stalk (subunits gamma, delta, and epsilon) rotating inside the F1 region and a stationary peripheral stalk (subunits F6, b, d, and OSCP).

It is found in the mitochondrion. It localises to the mitochondrion inner membrane. Its function is as follows. Subunit epsilon, of the mitochondrial membrane ATP synthase complex (F(1)F(0) ATP synthase or Complex V) that produces ATP from ADP in the presence of a proton gradient across the membrane which is generated by electron transport complexes of the respiratory chain. ATP synthase complex consist of a soluble F(1) head domain - the catalytic core - and a membrane F(1) domain - the membrane proton channel. These two domains are linked by a central stalk rotating inside the F(1) region and a stationary peripheral stalk. During catalysis, ATP synthesis in the catalytic domain of F(1) is coupled via a rotary mechanism of the central stalk subunits to proton translocation. In vivo, can only synthesize ATP although its ATP hydrolase activity can be activated artificially in vitro. May be essential for the assembly of F(1) and may play an important role in the incorporation of the hydrophobic subunit c into the F(1)-c oligomer rotor of the mitochondrial ATP synthase complex. This Bos taurus (Bovine) protein is ATP synthase F(1) complex subunit epsilon, mitochondrial.